The sequence spans 1627 residues: Adhesin P1 (1627 aa).

The signal sequence occupies residues 1-59 (MHQTKKTALSKSTWILILTATASLATGLTVVGHFTSTTTTLKRQQFSYTRPDEVALRHT). Disordered regions lie at residues 219–238 (LPQQ…AMFG), 252–355 (NEKL…PWRP), 898–953 (WRND…TTQD), and 1274–1362 (SFGT…TGND). Residues 224 to 234 (TESGQNTSTTG) show a composition bias toward polar residues. Over residues 261 to 276 (TGSSTTSGSGQSTQRG) the composition is skewed to low complexity. Basic and acidic residues predominate over residues 282 to 297 (TKVKALKIEVKKKSDS). Composition is skewed to polar residues over residues 903-933 (ASSG…SAGN), 939-953 (QDNI…TTQD), and 1274-1297 (SFGT…VFGT). Gly residues predominate over residues 1307–1320 (SGGGAGGGSSGSGQ). Residues 1341-1352 (STSDGNTSSTNN) show a composition bias toward low complexity. Residues 1403–1415 (GPQSVKFKSPDQI) form a cytadherence epitope region. A helical transmembrane segment spans residues 1527–1547 (AITVPIVVIVLSVTLGLAIGI). The tract at residues 1589–1627 (QAPKRLKQTSAAKPGAPRPPVPPKPGAPKPPVQPPKKPA) is disordered. A compositionally biased stretch (pro residues) spans 1604 to 1627 (APRPPVPPKPGAPKPPVQPPKKPA).

This sequence belongs to the adhesin P1 family.

Its subcellular location is the cell membrane. It is found in the cell projection. It localises to the attachment organelle. The protein resides in the cell surface. In terms of biological role, the protein is the major adhesin mediating the attachment of this mycoplasma to respiratory epithelium. This chain is Adhesin P1 (mgpA), found in Mycoplasma pneumoniae (strain ATCC 29342 / M129 / Subtype 1) (Mycoplasmoides pneumoniae).